The chain runs to 443 residues: Dihydroorotate dehydrogenase (quinone), mitochondrial (443 aa).

The transit peptide at 1 to 21 (MYQRSLFRGVAQGLKRSSVRF) directs the protein to the mitochondrion. The helical transmembrane segment at 38-54 (WKLLSVIGSFTAGVAIY) threads the bilayer. FMN is bound by residues 122–126 (AGFDK) and serine 146. Lysine 126 is a substrate binding site. Position 168 is a phosphoserine (serine 168). Position 171-175 (171-175 (NRYGF)) interacts with substrate. Positions 234 and 264 each coordinate FMN. 264–269 (NVSSPN) lines the substrate pocket. Serine 267 (nucleophile) is an active-site residue. Lysine 306 contributes to the FMN binding site. 335–336 (NT) provides a ligand contact to substrate. Residues glycine 358, glycine 387, and 408–409 (YT) contribute to the FMN site.

This sequence belongs to the dihydroorotate dehydrogenase family. Type 2 subfamily. It depends on FMN as a cofactor.

Its subcellular location is the mitochondrion inner membrane. It catalyses the reaction (S)-dihydroorotate + a quinone = orotate + a quinol. It participates in pyrimidine metabolism; UMP biosynthesis via de novo pathway; orotate from (S)-dihydroorotate (quinone route): step 1/1. Its function is as follows. In the de novo pyrimidine biosynthesis pathway, catalyzes the stereospecific oxidation of (S)-dihydroorotate to orotate with reduction of flavin and the transfer of electrons to ubiquinone, which is part of the respiratory chain. Does not use fumarate and NAD as electron acceptors. This Schizosaccharomyces pombe (strain 972 / ATCC 24843) (Fission yeast) protein is Dihydroorotate dehydrogenase (quinone), mitochondrial (ura3).